The following is a 497-amino-acid chain: Angiopoietin-1 (497 aa).

Positions 1–19 (MTVFLSFAFFAAILTHIGC) are cleaved as a signal peptide. Residues 81-119 (QKLQHLEHVMENYTQWLQKLENYIVENMKSEMAQIQQNA) adopt a coiled-coil conformation. Asparagine 92, asparagine 122, asparagine 154, asparagine 243, and asparagine 294 each carry an N-linked (GlcNAc...) asparagine glycan. A coiled-coil region spans residues 153-261 (LNQTSRLEIQ…LELMDTVHNL (109 aa)). Residues 276-496 (REEEKPFRDC…STTMMIRPLD (221 aa)) form the Fibrinogen C-terminal domain. Disulfide bonds link cysteine 285–cysteine 314 and cysteine 438–cysteine 451.

In terms of assembly, homooligomer. Interacts with TEK/TIE2. Interacts with SVEP1/polydom. Interacts with THBD; this interaction significantly inhibits the generation of activated PC and TAFIa/CPB2 by the thrombin/thrombomodulin complex.

The protein resides in the secreted. In terms of biological role, binds and activates TIE2 receptor by inducing its tyrosine phosphorylation. Implicated in endothelial developmental processes later and distinct from that of VEGF. Appears to play a crucial role in mediating reciprocal interactions between the endothelium and surrounding matrix and mesenchyme. Mediates blood vessel maturation/stability. It may play an important role in the heart early development. The chain is Angiopoietin-1 (Angpt1) from Rattus norvegicus (Rat).